A 76-amino-acid chain; its full sequence is Conotoxin Cal5a L1 (76 aa).

Residues methionine 1–alanine 22 form the signal peptide. Positions serine 23–glutamine 42 are excised as a propeptide. Proline 50 carries the post-translational modification 4-hydroxyproline. 4-hydroxyproline; in form cal5a, and form cal5b is present on proline 58. The residue at position 62 (proline 62) is a 4-hydroxyproline; in form cal5a, form cal5b, and form cal5c. A 4-hydroxyproline; in form cal5a, form cal5b, form cal5c, and form cal5d modification is found at proline 64.

Post-translationally, contains 2 disulfide bonds that can be either 'C1-C3, C2-C4' or 'C1-C4, C2-C3', since these disulfide connectivities have been observed for conotoxins with cysteine framework V (for examples, see AC P0DQQ7 and AC P81755). In terms of processing, five different peptides have been described after total venom examination by HPLC-MS. Cal5a is the longest. Cal5b-Cal5e are identical in length but are differentially hydroxylated. It is possible that hydroxylation and proteolysis at position 53 are incomplete in some of these peptides. As to expression, expressed by the venom duct.

It is found in the secreted. Its function is as follows. Probable neurotoxin with unknown target. Possibly targets ion channels. In Californiconus californicus (California cone), this protein is Conotoxin Cal5a L1.